A 171-amino-acid polypeptide reads, in one-letter code: MEVILIKPVRKLGKIGDILKVADGFGRNYLLPQKLAIRATKSNKELIVKQKYEFEEKDKQVREEVEKINTIIKDQQLVFIRQTSDDCKLFGSVTNKDIADKLSKNISYNISHSNIILDKQIKSTGIYTVEIRLHAELTSIVTVVVARSESEAQDYLREQKAETLEDVDETA.

It belongs to the bacterial ribosomal protein bL9 family.

Binds to the 23S rRNA. This chain is Large ribosomal subunit protein bL9, found in Rickettsia prowazekii (strain Madrid E).